The following is a 151-amino-acid chain: Small ribosomal subunit protein uS13 (151 aa).

This sequence belongs to the universal ribosomal protein uS13 family. As to quaternary structure, part of the 30S ribosomal subunit. Forms a loose heterodimer with protein S19. Forms two bridges to the 50S subunit in the 70S ribosome.

Located at the top of the head of the 30S subunit, it contacts several helices of the 16S rRNA. In the 70S ribosome it contacts the 23S rRNA (bridge B1a) and protein L5 of the 50S subunit (bridge B1b), connecting the 2 subunits; these bridges are implicated in subunit movement. The polypeptide is Small ribosomal subunit protein uS13 (Staphylothermus marinus (strain ATCC 43588 / DSM 3639 / JCM 9404 / F1)).